We begin with the raw amino-acid sequence, 630 residues long: Pro-interleukin-16 (630 aa).

Disordered stretches follow at residues 30 to 268 (ENPG…FPLT) and 316 to 343 (PKEG…ASDT). Residues 129–143 (IRASSSSSIKQRISS) show a composition bias toward low complexity. The residue at position 220 (S220) is a Phosphoserine. Polar residues predominate over residues 321–343 (SPTSSSNEDSAANGSAETSASDT). Residues 404-500 (KQLDSIHVTI…IVTRKLTAES (97 aa)) are interaction with PPP1R12A, PPP1R12B and PPP1R12C. PDZ domains follow at residues 410–495 (HVTI…VTRK) and 532–617 (TVTL…IRRK).

In terms of assembly, homotetramer. Pro-interleukin-16 interacts (via PDZ 2 domain) with PPP1R12A, PPP1R12B and PPP1R12C. Pro-interleukin-16 interacts with GRIN2A. Pro-interleukin-16 interacts with GABPB1. Pro-interleukin-16 interacts (via PDZ 3 domain) with HDAC3.

The protein resides in the secreted. The protein localises to the cytoplasm. Its subcellular location is the nucleus. Interleukin-16 stimulates a migratory response in CD4+ lymphocytes, monocytes, and eosinophils. Primes CD4+ T-cells for IL-2 and IL-15 responsiveness. Also induces T-lymphocyte expression of interleukin 2 receptor. Ligand for CD4. Functionally, pro-interleukin-16 is involved in cell cycle progression in T-cells. Appears to be involved in transcriptional regulation of SKP2 and is probably part of a transcriptional repression complex on the core promoter of the SKP2 gene. May act as a scaffold for GABPB1 (the DNA-binding subunit the GABP transcription factor complex) and HDAC3 thus maintaining transcriptional repression and blocking cell cycle progression in resting T-cells. The protein is Pro-interleukin-16 (IL16) of Macaca mulatta (Rhesus macaque).